The following is a 92-amino-acid chain: Large ribosomal subunit protein eL31 (92 aa).

Belongs to the eukaryotic ribosomal protein eL31 family.

This is Large ribosomal subunit protein eL31 from Halobacterium salinarum (strain ATCC 29341 / DSM 671 / R1).